Reading from the N-terminus, the 126-residue chain is Holo-[acyl-carrier-protein] synthase (126 aa).

Positions 9 and 58 each coordinate Mg(2+).

It belongs to the P-Pant transferase superfamily. AcpS family. Mg(2+) is required as a cofactor.

The protein resides in the cytoplasm. It catalyses the reaction apo-[ACP] + CoA = holo-[ACP] + adenosine 3',5'-bisphosphate + H(+). Its function is as follows. Transfers the 4'-phosphopantetheine moiety from coenzyme A to a Ser of acyl-carrier-protein. The chain is Holo-[acyl-carrier-protein] synthase from Escherichia fergusonii (strain ATCC 35469 / DSM 13698 / CCUG 18766 / IAM 14443 / JCM 21226 / LMG 7866 / NBRC 102419 / NCTC 12128 / CDC 0568-73).